The chain runs to 622 residues: MTRTTTLEEVKFEIPTWDNNNHIEVADGSGRSESNASGDTIRPKGRIRRSMTACNTCRKLKTRCDLDPRGHACRRCLSLRIECKLPDTAERFQDNASMWSDATAAIPSIEERLNSLERSMTEMTSMMRQMVDRSPSISGSSVSLLTRSGLTEETASVEGSQPSFIAPRPIRLIQELQSDFLGEPNVLPAESRSLSESFSNGVLDPKLSLKLIQLFVEHFGSWVSIDSPSDIHNDLRPTDPLLYRTACLLASRYVPGIPSSVIQAEYLQIRHAAVNILWNSQPMKYETLQALTLLSLWPTTIQKEAPMDSWLLSGISINHAIISFDFLNHAPAELIVDNDMVAKLRLWNALCLTQLQFAIGNARPFHIQQRYLEHCPRLLEHPAATFDDGKMVAEIQLYLVTSKLQNDPHRMRSAEIEYEEIERWKMEWAHLLTGEQHSTLELNLWYCQLLLYRTAMKCQWESEPLVSEVLRNARLIISKFLLVRFSTALGFVDQTYYIVGYAALNLCDFNPMDPLIDQVQTFLLHLSPNEDHIAYRFSYTISELKRRCTACPNPNSAVKGAFGDARKLNLGQLHFMPQVLDTMMGDYSALEQLMPEVSPHSLPDMLNNVTGELQAGYRTAIL.

The segment at residues 54-83 (CNTCRKLKTRCDLDPRGHACRRCLSLRIEC) is a DNA-binding region (zn(2)-C6 fungal-type).

This sequence belongs to the prtT family.

It localises to the nucleus. In terms of biological role, transcription factor required for protein utilization and degradation. Regulates transcription of major secreted proteases. In Aspergillus clavatus (strain ATCC 1007 / CBS 513.65 / DSM 816 / NCTC 3887 / NRRL 1 / QM 1276 / 107), this protein is Transcriptional activator of proteases prtT (prtT).